Consider the following 463-residue polypeptide: Membrane-bound lytic murein transglycosylase F (463 aa).

Positions Met-1 to Ala-33 are cleaved as a signal peptide. The non-LT domain stretch occupies residues Leu-34–Ile-272. The segment at Arg-273–Ile-463 is LT domain. Glu-317 is a catalytic residue.

In the N-terminal section; belongs to the bacterial solute-binding protein 3 family. It in the C-terminal section; belongs to the transglycosylase Slt family.

It is found in the cell outer membrane. The catalysed reaction is Exolytic cleavage of the (1-&gt;4)-beta-glycosidic linkage between N-acetylmuramic acid (MurNAc) and N-acetylglucosamine (GlcNAc) residues in peptidoglycan, from either the reducing or the non-reducing ends of the peptidoglycan chains, with concomitant formation of a 1,6-anhydrobond in the MurNAc residue.. Functionally, murein-degrading enzyme that degrades murein glycan strands and insoluble, high-molecular weight murein sacculi, with the concomitant formation of a 1,6-anhydromuramoyl product. Lytic transglycosylases (LTs) play an integral role in the metabolism of the peptidoglycan (PG) sacculus. Their lytic action creates space within the PG sacculus to allow for its expansion as well as for the insertion of various structures such as secretion systems and flagella. This is Membrane-bound lytic murein transglycosylase F from Alteromonas mediterranea (strain DSM 17117 / CIP 110805 / LMG 28347 / Deep ecotype).